The chain runs to 354 residues: Uroporphyrinogen decarboxylase (354 aa).

Substrate is bound by residues 25 to 29 (RQAGR), phenylalanine 44, aspartate 75, tyrosine 152, threonine 207, and histidine 330.

This sequence belongs to the uroporphyrinogen decarboxylase family. Homodimer.

The protein resides in the cytoplasm. It carries out the reaction uroporphyrinogen III + 4 H(+) = coproporphyrinogen III + 4 CO2. Its pathway is porphyrin-containing compound metabolism; protoporphyrin-IX biosynthesis; coproporphyrinogen-III from 5-aminolevulinate: step 4/4. Its function is as follows. Catalyzes the decarboxylation of four acetate groups of uroporphyrinogen-III to yield coproporphyrinogen-III. The sequence is that of Uroporphyrinogen decarboxylase from Xanthomonas axonopodis pv. citri (strain 306).